The following is a 473-amino-acid chain: O-methyltransferase ARMGADRAFT_1088206 (473 aa).

S-adenosyl-L-methionine-binding positions include 276-277, D299, 330-331, and R348; these read AG and DM. Catalysis depends on H352, which acts as the Proton acceptor.

Belongs to the class I-like SAM-binding methyltransferase superfamily. Cation-independent O-methyltransferase family.

It functions in the pathway secondary metabolite biosynthesis. In terms of biological role, O-methyltransferase, part of the gene cluster that mediates the biosynthesis of melleolides, a range of antifungal and phytotoxic polyketide derivatives composed of an orsellinic acid (OA) moiety esterified to various sesquiterpene alcohols. The first step in melleolides biosynthesis is performed by the delta(6)-protoilludene synthase PRO1 which catalyzes the cyclization of farnesyl diphosphate to protoilludene. The orsellinic acid synthase armB produces OA by condensing acetyl-CoA with 3 malonyl-CoA units in a three-round chain elongation reaction folowed by a C2-C7 ring closure. ArmB further catalyzes the trans-esterification of OA to the various sesquiterpene alcohols resulting from the hydroxylation of protoilludene. The melleolides cluster also includes 5 cytochrome P450 monooxygenases, 4 NAD(+)-dependent oxidoreductases, one flavin-dependent oxidoreductase, and one O-methyltransferase. The cytochrome P450 monooxygenases may be involved in protoilludene hydroxylation to elaborate melleolides with multiple alcohol groups, such as melleolide D, which carries alcohol functionalities at C-4, C-5, C-10, and C-13. The role of the NAD(+)-dependent enzymes remains unknown. Numerous melleolides, including arnamial, show 5'-O-methylation of the aromatic moiety which may be catalyzed by the methyltransferase encoded in the cluster. The flavin-dependent oxidoreductase might represent the dehydrogenase yielding the aldehyde in position 1 of arnamial and other melleolides. Finally, several halogenase localized outside of the cluster, are able to catalyze the transfer of a single chlorine atom to the melleolide backbone, resulting in a 6'-chloromelleolide product. In Armillaria gallica (Bulbous honey fungus), this protein is O-methyltransferase ARMGADRAFT_1088206.